A 557-amino-acid chain; its full sequence is Dihydroxy-acid dehydratase (557 aa).

Residue D78 coordinates Mg(2+). C119 is a [2Fe-2S] cluster binding site. Positions 120 and 121 each coordinate Mg(2+). K121 carries the post-translational modification N6-carboxylysine. A [2Fe-2S] cluster-binding site is contributed by C194. E446 contributes to the Mg(2+) binding site. The active-site Proton acceptor is the S472.

Belongs to the IlvD/Edd family. As to quaternary structure, homodimer. The cofactor is [2Fe-2S] cluster. Mg(2+) serves as cofactor.

It catalyses the reaction (2R)-2,3-dihydroxy-3-methylbutanoate = 3-methyl-2-oxobutanoate + H2O. It carries out the reaction (2R,3R)-2,3-dihydroxy-3-methylpentanoate = (S)-3-methyl-2-oxopentanoate + H2O. The protein operates within amino-acid biosynthesis; L-isoleucine biosynthesis; L-isoleucine from 2-oxobutanoate: step 3/4. Its pathway is amino-acid biosynthesis; L-valine biosynthesis; L-valine from pyruvate: step 3/4. In terms of biological role, functions in the biosynthesis of branched-chain amino acids. Catalyzes the dehydration of (2R,3R)-2,3-dihydroxy-3-methylpentanoate (2,3-dihydroxy-3-methylvalerate) into 2-oxo-3-methylpentanoate (2-oxo-3-methylvalerate) and of (2R)-2,3-dihydroxy-3-methylbutanoate (2,3-dihydroxyisovalerate) into 2-oxo-3-methylbutanoate (2-oxoisovalerate), the penultimate precursor to L-isoleucine and L-valine, respectively. This is Dihydroxy-acid dehydratase from Desulfosudis oleivorans (strain DSM 6200 / JCM 39069 / Hxd3) (Desulfococcus oleovorans).